A 41-amino-acid polypeptide reads, in one-letter code: uncharacterized protein (41 aa).

A helical membrane pass occupies residues 10 to 32 (LIILAVPFMIKTSLKTNLIFFFL).

It localises to the cell inner membrane. This is an uncharacterized protein from Escherichia coli (strain K12).